Here is a 640-residue protein sequence, read N- to C-terminus: Influenza virus NS1A-binding protein homolog B (640 aa).

In terms of domain architecture, BTB spans Cys-32–Lys-100. Residues Ala-135–Asn-186 enclose the BACK domain. The interval Lys-257–Asn-278 is disordered. Over residues Gly-267–Asn-278 the composition is skewed to low complexity. Kelch repeat units lie at residues Lys-366–Gly-412, Glu-413–Asn-460, Leu-462–Gly-509, Tyr-510–Gly-556, Lys-557–Asn-603, and Leu-605–Asn-640.

Its subcellular location is the cytoplasm. It is found in the cytoskeleton. The protein localises to the nucleus. In terms of biological role, plays a role in cell division and in the dynamic organization of the actin skeleton as a stabilizer of actin filaments by association with F-actin through Kelch repeats. This Danio rerio (Zebrafish) protein is Influenza virus NS1A-binding protein homolog B (ivns1abpb).